A 199-amino-acid polypeptide reads, in one-letter code: Guanylate kinase (199 aa).

A Guanylate kinase-like domain is found at 20–198 (GKLIILTGPS…ALQAIEVALF (179 aa)). 27–34 (GPSGVGKG) lines the ATP pocket.

Belongs to the guanylate kinase family.

It localises to the cytoplasm. It carries out the reaction GMP + ATP = GDP + ADP. In terms of biological role, essential for recycling GMP and indirectly, cGMP. This is Guanylate kinase from Nostoc sp. (strain PCC 7120 / SAG 25.82 / UTEX 2576).